The primary structure comprises 256 residues: GTP cyclohydrolase FolE2 (256 aa).

The protein belongs to the GTP cyclohydrolase IV family.

The catalysed reaction is GTP + H2O = 7,8-dihydroneopterin 3'-triphosphate + formate + H(+). It functions in the pathway cofactor biosynthesis; 7,8-dihydroneopterin triphosphate biosynthesis; 7,8-dihydroneopterin triphosphate from GTP: step 1/1. Functionally, converts GTP to 7,8-dihydroneopterin triphosphate. This Caldicellulosiruptor saccharolyticus (strain ATCC 43494 / DSM 8903 / Tp8T 6331) protein is GTP cyclohydrolase FolE2.